Reading from the N-terminus, the 491-residue chain is Ketol-acid reductoisomerase (NADP(+)) (491 aa).

The KARI N-terminal Rossmann domain occupies 14–208 (LKHLGKCRFM…GSHRAGVLES (195 aa)). NADP(+) contacts are provided by residues 45-48 (CGSQ), arginine 68, and serine 78. Histidine 132 is a catalytic residue. Glycine 158 contacts NADP(+). KARI C-terminal knotted domains lie at 209–344 (SFVA…QAPN) and 345–485 (YQQE…MQNM). Aspartate 217, glutamate 221, glutamate 389, and glutamate 393 together coordinate Mg(2+). Serine 414 provides a ligand contact to substrate.

This sequence belongs to the ketol-acid reductoisomerase family. Mg(2+) serves as cofactor.

It catalyses the reaction (2R)-2,3-dihydroxy-3-methylbutanoate + NADP(+) = (2S)-2-acetolactate + NADPH + H(+). It carries out the reaction (2R,3R)-2,3-dihydroxy-3-methylpentanoate + NADP(+) = (S)-2-ethyl-2-hydroxy-3-oxobutanoate + NADPH + H(+). Its pathway is amino-acid biosynthesis; L-isoleucine biosynthesis; L-isoleucine from 2-oxobutanoate: step 2/4. It functions in the pathway amino-acid biosynthesis; L-valine biosynthesis; L-valine from pyruvate: step 2/4. In terms of biological role, involved in the biosynthesis of branched-chain amino acids (BCAA). Catalyzes an alkyl-migration followed by a ketol-acid reduction of (S)-2-acetolactate (S2AL) to yield (R)-2,3-dihydroxy-isovalerate. In the isomerase reaction, S2AL is rearranged via a Mg-dependent methyl migration to produce 3-hydroxy-3-methyl-2-ketobutyrate (HMKB). In the reductase reaction, this 2-ketoacid undergoes a metal-dependent reduction by NADPH to yield (R)-2,3-dihydroxy-isovalerate. The sequence is that of Ketol-acid reductoisomerase (NADP(+)) from Blochmanniella pennsylvanica (strain BPEN).